Consider the following 411-residue polypeptide: Elongation factor Tu, apicoplast (411 aa).

One can recognise a tr-type G domain in the interval 10-214 (KPHVNIGTIG…TVDSYIEKPE (205 aa)). The tract at residues 19–26 (GHVDHGKT) is G1. GTP is bound at residue 19–26 (GHVDHGKT). Thr26 serves as a coordination point for Mg(2+). Residues 61-65 (GITIN) are G2. The interval 82–85 (DCPG) is G3. GTP is bound by residues 82 to 86 (DCPGH) and 137 to 140 (NKED). The segment at 137–140 (NKED) is G4. A G5 region spans residues 175 to 177 (SAL).

The protein belongs to the TRAFAC class translation factor GTPase superfamily. Classic translation factor GTPase family. EF-Tu/EF-1A subfamily.

It is found in the plastid. The protein resides in the apicoplast. It carries out the reaction GTP + H2O = GDP + phosphate + H(+). GTP hydrolase that promotes the GTP-dependent binding of aminoacyl-tRNA to the A-site of ribosomes during protein biosynthesis. The sequence is that of Elongation factor Tu, apicoplast (tufA) from Theileria parva (East coast fever infection agent).